Consider the following 465-residue polypeptide: Argininosuccinate lyase (465 aa).

The protein belongs to the lyase 1 family. Argininosuccinate lyase subfamily.

Its subcellular location is the cytoplasm. The catalysed reaction is 2-(N(omega)-L-arginino)succinate = fumarate + L-arginine. The protein operates within amino-acid biosynthesis; L-arginine biosynthesis; L-arginine from L-ornithine and carbamoyl phosphate: step 3/3. The chain is Argininosuccinate lyase from Aromatoleum aromaticum (strain DSM 19018 / LMG 30748 / EbN1) (Azoarcus sp. (strain EbN1)).